Here is a 651-residue protein sequence, read N- to C-terminus: Coronin-like protein (651 aa).

WD repeat units lie at residues 79–110 (GHTA…GIWD), 138–169 (GHAR…KLWN), 180–210 (KHPD…RVWN), and 226–257 (AKNQ…GIWD). The disordered stretch occupies residues 408-609 (APSFHEAKRP…TSPKSLGLKK (202 aa)). Residues 427 to 451 (LEEKKEQPKVEKPISESEKEVKQEA) are compositionally biased toward basic and acidic residues. A phosphoserine mark is found at Ser441, Ser454, and Ser456. The segment covering 452 to 465 (PKSPSPLKSASSSS) has biased composition (low complexity). Residues Thr517 and Thr529 each carry the phosphothreonine modification. Composition is skewed to basic and acidic residues over residues 523-540 (ETKK…ELKP) and 547-572 (TDRK…EQEK). Phosphoserine occurs at positions 573 and 579. Low complexity predominate over residues 578–590 (SSITAAKTAITAS). The stretch at 618–650 (VLQLEDVVDKLTKANLDKDERLLKLEQKIGELS) forms a coiled coil.

Belongs to the WD repeat coronin family. In terms of assembly, binds to F-actin.

The sequence is that of Coronin-like protein (CRN1) from Saccharomyces cerevisiae (strain ATCC 204508 / S288c) (Baker's yeast).